The chain runs to 1013 residues: PHD finger protein 20-like protein 1 (1013 aa).

One can recognise a Tudor 1 domain in the interval 11 to 71 (ITFEIGARLE…SNRLRPLERP (61 aa)). Residues Lys75 and Lys79 each participate in a glycyl lysine isopeptide (Lys-Gly) (interchain with G-Cter in SUMO2) cross-link. The Tudor 2 domain occupies 85–141 (FDFKAGEEVLARWTDCRYYPAKIEAINKEGTFTVQFYDGVIRCLKRMHIKAMPEDAK). 4 disordered regions span residues 183-206 (AKNK…RDGG), 309-368 (EQAI…TPKS), 389-454 (VINK…QSSV), and 482-511 (VTGS…FANP). Over residues 315–346 (KPQSQKKNEAVISSSANTQKPALLSSTLSSGK) the composition is skewed to polar residues. Residue Ser368 is modified to Phosphoserine. Over residues 404–415 (PCKHSERRRRSQ) the composition is skewed to basic residues. Ser432 is modified (phosphoserine). Residues 443–453 (SISSQNQQQSS) are compositionally biased toward low complexity. Residues 496–505 (ECPREEKEET) show a composition bias toward basic and acidic residues. A Glycyl lysine isopeptide (Lys-Gly) (interchain with G-Cter in SUMO2) cross-link involves residue Lys530. Basic and acidic residues predominate over residues 533–565 (KKVKLEEKTSTAFGKRKEKDKEKKEKRDKDHYK). The segment at 533–585 (KKVKLEEKTSTAFGKRKEKDKEKKEKRDKDHYKPKQKKKKKKKKKSKQHDYSD) is disordered. A compositionally biased stretch (basic residues) spans 566–579 (PKQKKKKKKKKKSK). The segment at 681–729 (IVRCICELDEENGFMIQCEECLCWQHSVCMGLLEDSIPEQYICYICRDP) adopts a PHD-type zinc-finger fold. The span at 824 to 852 (RKITPQDRANSEGKECVQNHKEPALRMEE) shows a compositional bias: basic and acidic residues. The segment at 824–911 (RKITPQDRAN…LLYKNRGVSE (88 aa)) is disordered. Residues 854–878 (YITSEHSYQKPQSFSQDCQSLTDPG) are compositionally biased toward polar residues. Residues 879-892 (SSDDDDASSFEEDG) show a composition bias toward acidic residues. Position 905 is an N6-acetyllysine (Lys905).

In terms of assembly, interacts with methylated DNMT1 (DNMT1K142me1). Interacts with SOX2.

It localises to the nucleus. Its function is as follows. Is a negative regulator of proteasomal degradation of a set of methylated proteins, including DNMT1 and SOX2. Involved in the maintainance of embryonic stem cells pluripotency, through the regulation of SOX2 levels. The protein is PHD finger protein 20-like protein 1 (Phf20l1) of Mus musculus (Mouse).